The sequence spans 883 residues: Alanine--tRNA ligase (883 aa).

4 residues coordinate Zn(2+): histidine 560, histidine 564, cysteine 665, and histidine 669.

It belongs to the class-II aminoacyl-tRNA synthetase family. Zn(2+) serves as cofactor.

The protein resides in the cytoplasm. It carries out the reaction tRNA(Ala) + L-alanine + ATP = L-alanyl-tRNA(Ala) + AMP + diphosphate. Its function is as follows. Catalyzes the attachment of alanine to tRNA(Ala) in a two-step reaction: alanine is first activated by ATP to form Ala-AMP and then transferred to the acceptor end of tRNA(Ala). Also edits incorrectly charged Ser-tRNA(Ala) and Gly-tRNA(Ala) via its editing domain. The sequence is that of Alanine--tRNA ligase from Mesomycoplasma hyopneumoniae (strain 232) (Mycoplasma hyopneumoniae).